A 929-amino-acid polypeptide reads, in one-letter code: DNA mismatch repair protein MutS (929 aa).

Positions 22–46 (PAAPRSTGSAAAPPPSPAVLDDRSG) are disordered. The span at 23-32 (AAPRSTGSAA) shows a compositional bias: low complexity. 678-685 (GPNMAGKS) is an ATP binding site.

The protein belongs to the DNA mismatch repair MutS family.

Its function is as follows. This protein is involved in the repair of mismatches in DNA. It is possible that it carries out the mismatch recognition step. This protein has a weak ATPase activity. This Rhodospirillum rubrum (strain ATCC 11170 / ATH 1.1.1 / DSM 467 / LMG 4362 / NCIMB 8255 / S1) protein is DNA mismatch repair protein MutS.